The primary structure comprises 426 residues: tRNA(Ile)-lysidine synthase (426 aa).

Ser21–Ser26 is an ATP binding site.

This sequence belongs to the tRNA(Ile)-lysidine synthase family.

Its subcellular location is the cytoplasm. It carries out the reaction cytidine(34) in tRNA(Ile2) + L-lysine + ATP = lysidine(34) in tRNA(Ile2) + AMP + diphosphate + H(+). Its function is as follows. Ligates lysine onto the cytidine present at position 34 of the AUA codon-specific tRNA(Ile) that contains the anticodon CAU, in an ATP-dependent manner. Cytidine is converted to lysidine, thus changing the amino acid specificity of the tRNA from methionine to isoleucine. In Enterobacter sp. (strain 638), this protein is tRNA(Ile)-lysidine synthase.